The primary structure comprises 873 residues: Bifunctional uridylyltransferase/uridylyl-removing enzyme (873 aa).

The uridylyltransferase stretch occupies residues 1-332 (MPYQCPITFN…NGGQTQEAEI (332 aa)). The tract at residues 333 to 692 (LDNDFQRRGS…ISKKATRGGT (360 aa)) is uridylyl-removing. In terms of domain architecture, HD spans 451–573 (VDEHSIRLLK…VRDEESLELL (123 aa)). 2 ACT domains span residues 693–777 (EVFV…RTPR) and 800–873 (LMEL…ELAP).

Belongs to the GlnD family. Mg(2+) is required as a cofactor.

It carries out the reaction [protein-PII]-L-tyrosine + UTP = [protein-PII]-uridylyl-L-tyrosine + diphosphate. The enzyme catalyses [protein-PII]-uridylyl-L-tyrosine + H2O = [protein-PII]-L-tyrosine + UMP + H(+). Uridylyltransferase (UTase) activity is inhibited by glutamine, while glutamine activates uridylyl-removing (UR) activity. In terms of biological role, modifies, by uridylylation and deuridylylation, the PII regulatory proteins (GlnB and homologs), in response to the nitrogen status of the cell that GlnD senses through the glutamine level. Under low glutamine levels, catalyzes the conversion of the PII proteins and UTP to PII-UMP and PPi, while under higher glutamine levels, GlnD hydrolyzes PII-UMP to PII and UMP (deuridylylation). Thus, controls uridylylation state and activity of the PII proteins, and plays an important role in the regulation of nitrogen assimilation and metabolism. The protein is Bifunctional uridylyltransferase/uridylyl-removing enzyme of Vibrio atlanticus (strain LGP32) (Vibrio splendidus (strain Mel32)).